We begin with the raw amino-acid sequence, 105 residues long: Met repressor (105 aa).

The protein belongs to the MetJ family. In terms of assembly, homodimer.

Its subcellular location is the cytoplasm. Its function is as follows. This regulatory protein, when combined with SAM (S-adenosylmethionine) represses the expression of the methionine regulon and of enzymes involved in SAM synthesis. The protein is Met repressor of Sodalis glossinidius (strain morsitans).